Consider the following 812-residue polypeptide: Lon protease (812 aa).

Residues 12–205 (LPMLPLRGVL…YLCELLAKEM (194 aa)) enclose the Lon N-terminal domain. 357 to 364 (GPPGVGKT) lines the ATP pocket. In terms of domain architecture, Lon proteolytic spans 593–774 (ENQVGVATGL…DEVLEETLLK (182 aa)). Catalysis depends on residues serine 680 and lysine 723.

This sequence belongs to the peptidase S16 family. As to quaternary structure, homohexamer. Organized in a ring with a central cavity.

The protein resides in the cytoplasm. The catalysed reaction is Hydrolysis of proteins in presence of ATP.. Its function is as follows. ATP-dependent serine protease that mediates the selective degradation of mutant and abnormal proteins as well as certain short-lived regulatory proteins. Required for cellular homeostasis and for survival from DNA damage and developmental changes induced by stress. Degrades polypeptides processively to yield small peptide fragments that are 5 to 10 amino acids long. Binds to DNA in a double-stranded, site-specific manner. The chain is Lon protease from Syntrophomonas wolfei subsp. wolfei (strain DSM 2245B / Goettingen).